The primary structure comprises 130 residues: Small ribosomal subunit protein uS8 (130 aa).

It belongs to the universal ribosomal protein uS8 family. In terms of assembly, part of the 30S ribosomal subunit.

Functionally, one of the primary rRNA binding proteins, it binds directly to 16S rRNA central domain where it helps coordinate assembly of the platform of the 30S subunit. This Methanoregula boonei (strain DSM 21154 / JCM 14090 / 6A8) protein is Small ribosomal subunit protein uS8.